A 160-amino-acid polypeptide reads, in one-letter code: Cytochrome b6-f complex subunit 4 (160 aa).

3 helical membrane-spanning segments follow: residues 36 to 56 (LLYTFPVCILGTIGCLVGLAV), 95 to 115 (LLGVVLMAGVPAGLLTVPFIE), and 131 to 151 (TVFLIGTVVAVWLGIGATLPI).

It belongs to the cytochrome b family. PetD subfamily. As to quaternary structure, the 4 large subunits of the cytochrome b6-f complex are cytochrome b6, subunit IV (17 kDa polypeptide, petD), cytochrome f and the Rieske protein, while the 4 small subunits are petG, petL, petM and petN. The complex functions as a dimer.

It is found in the plastid. Its subcellular location is the chloroplast thylakoid membrane. Component of the cytochrome b6-f complex, which mediates electron transfer between photosystem II (PSII) and photosystem I (PSI), cyclic electron flow around PSI, and state transitions. The protein is Cytochrome b6-f complex subunit 4 of Mesostigma viride (Green alga).